Reading from the N-terminus, the 265-residue chain is 3-methyl-2-oxobutanoate hydroxymethyltransferase (265 aa).

Mg(2+)-binding residues include D45 and D84. 3-methyl-2-oxobutanoate contacts are provided by residues 45–46 (DS), D84, and K114. E116 contacts Mg(2+). E183 serves as the catalytic Proton acceptor.

Belongs to the PanB family. In terms of assembly, homodecamer; pentamer of dimers. Mg(2+) serves as cofactor.

Its subcellular location is the cytoplasm. It carries out the reaction 3-methyl-2-oxobutanoate + (6R)-5,10-methylene-5,6,7,8-tetrahydrofolate + H2O = 2-dehydropantoate + (6S)-5,6,7,8-tetrahydrofolate. It functions in the pathway cofactor biosynthesis; (R)-pantothenate biosynthesis; (R)-pantoate from 3-methyl-2-oxobutanoate: step 1/2. Functionally, catalyzes the reversible reaction in which hydroxymethyl group from 5,10-methylenetetrahydrofolate is transferred onto alpha-ketoisovalerate to form ketopantoate. In Salinibacter ruber (strain DSM 13855 / M31), this protein is 3-methyl-2-oxobutanoate hydroxymethyltransferase.